The sequence spans 4001 residues: Ankyrin repeat and KH domain-containing protein mask (4001 aa).

Residues M1–N14 show a composition bias toward basic and acidic residues. Disordered stretches follow at residues M1–L61, K91–S174, and D391–D494. A compositionally biased stretch (polar residues) spans V15–P30. Residues N38–L61 are compositionally biased toward low complexity. Residues P94–V117 are compositionally biased toward polar residues. Over residues N118–S159 the composition is skewed to low complexity. The segment covering T160–S174 has biased composition (gly residues). 2 stretches are compositionally biased toward acidic residues: residues S408–P425 and V434–P486. S501 is modified (phosphoserine). 15 ANK repeats span residues S546 to L575, D584 to D614, K618 to A647, T651 to E680, N684 to T713, F718 to H747, E751 to M780, S784 to E813, E817 to A846, T851 to L880, G881 to A910, T914 to H943, G947 to K976, N981 to K1011, and D1014 to T1043. Disordered regions lie at residues A1046–R1067 and Q1306–L1376. The segment covering D1367–L1376 has biased composition (polar residues). 2 positions are modified to phosphoserine: S1389 and S1588. Disordered regions lie at residues G1583–S1612, S1646–L1669, E1682–L1779, V1852–A1872, M2084–H2108, and T2225–R2256. 3 stretches are compositionally biased toward acidic residues: residues S1646–E1657, I1685–D1704, and D1716–S1759. Residues D1760 to S1776 show a composition bias toward low complexity. Over residues M2084–Q2093 the composition is skewed to low complexity. The segment covering P2228 to S2237 has biased composition (polar residues). ANK repeat units follow at residues N2312–H2341, K2345–A2374, T2379–H2408, S2412–S2441, L2447–A2476, N2481–H2510, T2514–A2543, S2549–V2578, K2582–S2611, and R2615–S2644. Positions A2674–N2732 form a coiled coil. S2687 is modified (phosphoserine). At T2698 the chain carries Phosphothreonine. The disordered stretch occupies residues R2699–V3033. Basic residues predominate over residues A2706–M2719. Positions M2739–A2762 are enriched in acidic residues. S2747 and S2753 each carry phosphoserine. Over residues S2793–S2810 the composition is skewed to low complexity. Residues E2828 to V2839 are compositionally biased toward polar residues. A compositionally biased stretch (basic and acidic residues) spans R2868–N2886. The span at A2906–T2941 shows a compositional bias: low complexity. Residues A2950 to N2960 show a composition bias toward polar residues. The span at K2963–R2975 shows a compositional bias: basic and acidic residues. The segment covering T2995–Q3004 has biased composition (polar residues). Residues A3012–S3032 are compositionally biased toward low complexity. The KH domain maps to M3036–I3100. 3 stretches are compositionally biased toward low complexity: residues A3156 to S3178, S3195 to S3227, and N3244 to S3257. Disordered regions lie at residues A3156–G3329, K3383–Q3457, A3520–A3636, and I3744–A3786. Over residues Q3262 to A3278 the composition is skewed to polar residues. Residues G3396–P3416 show a composition bias toward low complexity. Positions Q3417–Q3427 are enriched in pro residues. The span at Q3428–Q3457 shows a compositional bias: low complexity. The segment covering N3539–P3559 has biased composition (polar residues). The segment covering Q3565–Q3577 has biased composition (low complexity). S3596 is modified (phosphoserine). Residues P3774–A3786 show a composition bias toward low complexity. A phosphoserine mark is found at S3820, S3822, and S3825. A disordered region spans residues K3876 to S3945. Over residues S3891–Q3910 the composition is skewed to low complexity.

May interact with Unc-89 (via protein kinase domain 1 or 2). Expressed ubiquitously in eye imaginal disk, slightly higher expression is seen in presumptive photoreceptors. Expressed in indirect flight muscle (IFM) (at protein level).

It is found in the cytoplasm. It localises to the myofibril. The protein localises to the sarcomere. The protein resides in the z line. Its subcellular location is the m line. In terms of biological role, mediator of receptor tyrosine kinase (RTK) signaling, and may act either downstream of MAPK or transduce signaling through a parallel branch of the RTK pathway. Required for the development and organization of indirect flight muscle sarcomeres by regulating the formation of M line and H zone and the correct assembly of thick and thin filaments in the sarcomere. The protein is Ankyrin repeat and KH domain-containing protein mask of Drosophila melanogaster (Fruit fly).